The primary structure comprises 167 residues: Phospholipase A2 heteromtoxin (167 aa).

The Ca(2+) site is built by Trp-38, Gly-40, and Gly-42. 5 disulfide bridges follow: Cys-39/Cys-61, Cys-60/Cys-99, Cys-67/Cys-92, Cys-90/Cys-127, and Cys-132/Cys-144. His-64 is a catalytic residue. Asp-65 contacts Ca(2+). The propeptide occupies 136 to 140; the sequence is GRSAR.

The protein belongs to the phospholipase A2 family. Group III subfamily. Heterodimer composed of a large and a small subunits; disulfide-linked. Ca(2+) is required as a cofactor. As to expression, expressed by the venom gland.

Its subcellular location is the secreted. The enzyme catalyses a 1,2-diacyl-sn-glycero-3-phosphocholine + H2O = a 1-acyl-sn-glycero-3-phosphocholine + a fatty acid + H(+). Its function is as follows. Phospholipase toxin, which catalyzes the calcium-dependent hydrolysis of the 2-acyl groups in 3-sn-phosphoglycerides. Inhibits both skeletal (RYR1) and cardiac (RYR2) ryanodine receptors (calcium release channels). Probably blocks ryanodine receptors by generating a lipid product. This chain is Phospholipase A2 heteromtoxin, found in Heterometrus laoticus (Thai giant scorpion).